The following is a 245-amino-acid chain: 1-(5-phosphoribosyl)-5-[(5-phosphoribosylamino)methylideneamino] imidazole-4-carboxamide isomerase (245 aa).

Catalysis depends on aspartate 8, which acts as the Proton acceptor. Catalysis depends on aspartate 130, which acts as the Proton donor.

Belongs to the HisA/HisF family.

Its subcellular location is the cytoplasm. It catalyses the reaction 1-(5-phospho-beta-D-ribosyl)-5-[(5-phospho-beta-D-ribosylamino)methylideneamino]imidazole-4-carboxamide = 5-[(5-phospho-1-deoxy-D-ribulos-1-ylimino)methylamino]-1-(5-phospho-beta-D-ribosyl)imidazole-4-carboxamide. The protein operates within amino-acid biosynthesis; L-histidine biosynthesis; L-histidine from 5-phospho-alpha-D-ribose 1-diphosphate: step 4/9. The sequence is that of 1-(5-phosphoribosyl)-5-[(5-phosphoribosylamino)methylideneamino] imidazole-4-carboxamide isomerase from Pseudomonas putida (strain ATCC 700007 / DSM 6899 / JCM 31910 / BCRC 17059 / LMG 24140 / F1).